We begin with the raw amino-acid sequence, 610 residues long: UvrABC system protein C (610 aa).

The GIY-YIG domain maps to 16-94 (SQPGVYRMYD…IKLYQPRYNV (79 aa)). The 36-residue stretch at 204 to 239 (QQVLNQLISRMESASRDLRFEDAARIRDQIQAVRRV) folds into the UVR domain.

The protein belongs to the UvrC family. In terms of assembly, interacts with UvrB in an incision complex.

It localises to the cytoplasm. The UvrABC repair system catalyzes the recognition and processing of DNA lesions. UvrC both incises the 5' and 3' sides of the lesion. The N-terminal half is responsible for the 3' incision and the C-terminal half is responsible for the 5' incision. In Pectobacterium atrosepticum (strain SCRI 1043 / ATCC BAA-672) (Erwinia carotovora subsp. atroseptica), this protein is UvrABC system protein C.